Reading from the N-terminus, the 527-residue chain is UDP-glucuronosyltransferase 2A1 (527 aa).

Positions 1-20 (MLNNLLLFSLQISLIGTTLG) are cleaved as a signal peptide. Residues 21-491 (GNVLIWPMEG…TWFQYHSLDV (471 aa)) are Lumenal-facing. N-linked (GlcNAc...) asparagine glycosylation is found at N49, L313, and N347. Residues 492 to 512 (IGFLLVCVTTAIFLVIQCCLF) form a helical membrane-spanning segment. The Cytoplasmic segment spans residues 513 to 527 (SCQKFGKIGKKKKRE).

It belongs to the UDP-glycosyltransferase family. As to expression, olfactory epithelium, brain and fetal lung. Not present in liver.

It localises to the membrane. The protein localises to the endoplasmic reticulum membrane. The catalysed reaction is glucuronate acceptor + UDP-alpha-D-glucuronate = acceptor beta-D-glucuronoside + UDP + H(+). The enzyme catalyses 16beta,17beta-estriol + UDP-alpha-D-glucuronate = 16beta,17beta-estriol 16-O-(beta-D-glucuronate) + UDP + H(+). It carries out the reaction 16alpha,17alpha-estriol + UDP-alpha-D-glucuronate = 16alpha,17alpha-estriol 16-O-(beta-D-glucuronate) + UDP + H(+). It catalyses the reaction 17alpha-estradiol + UDP-alpha-D-glucuronate = 17alpha-estradiol 17-O-(beta-D-glucuronate) + UDP + H(+). The catalysed reaction is 17alpha-estradiol + UDP-alpha-D-glucuronate = 17alpha-estradiol 3-O-(beta-D-glucuronate) + UDP + H(+). The enzyme catalyses 17beta-estradiol + UDP-alpha-D-glucuronate = 17beta-estradiol 3-O-(beta-D-glucuronate) + UDP + H(+). It carries out the reaction 17beta-estradiol + UDP-alpha-D-glucuronate = 17beta-estradiol 17-O-(beta-D-glucuronate) + UDP + H(+). It catalyses the reaction testosterone + UDP-alpha-D-glucuronate = testosterone 17-O-(beta-D-glucuronate) + UDP + H(+). The catalysed reaction is epitestosterone + UDP-alpha-D-glucuronate = epitestosterone 17-O-(beta-D-glucuronate) + UDP + H(+). The enzyme catalyses lithocholate + UDP-alpha-D-glucuronate = lithocholoyl-3-O-(beta-D-glucuronate) + UDP + H(+). It carries out the reaction lithocholate + UDP-alpha-D-glucuronate = lithocholoyl-24-O-(beta-D-glucuronate) + UDP. It catalyses the reaction deoxycholate + UDP-alpha-D-glucuronate = deoxycholoyl-24-O-(beta-D-glucuronate) + UDP. The catalysed reaction is hyodeoxycholate + UDP-alpha-D-glucuronate = hyodeoxycholoyl-24-O-(beta-D-glucuronate) + UDP. The enzyme catalyses hyocholate + UDP-alpha-D-glucuronate = hyocholoyl-24-O-(beta-D-glucuronate) + UDP. In terms of biological role, UDP-glucuronosyltransferase (UGT) that catalyzes phase II biotransformation reactions in which lipophilic substrates are conjugated with glucuronic acid to increase the metabolite's water solubility, thereby facilitating excretion into either the urine or bile. Essential for the elimination and detoxification of drugs, xenobiotics and endogenous compounds. Catalyzes the glucuronidation of endogenous steroid hormones such as androgens (testosterone and epitestosterone) and estrogens (estradiol and epiestriol). Contributes to bile acid (BA) detoxification by catalyzing the glucuronidation of BA substrates, which are natural detergents for dietary lipids absorption. Shows a high affinity to aliphatic odorants such as citronellol as well as olfactory tissue specificity, and therefore may be involved in olfaction. Shows a potential role in detoxification of toxic waste compounds in the amniotic fluid before birth, and air-born chemical after birth. The sequence is that of UDP-glucuronosyltransferase 2A1 from Homo sapiens (Human).